A 162-amino-acid chain; its full sequence is uncharacterized protein (162 aa).

The chain crosses the membrane as a helical span at residues 6–24; that stretch reads SYLISIFYIILITSETTAF.

It localises to the membrane. This is an uncharacterized protein from Caenorhabditis elegans.